A 216-amino-acid chain; its full sequence is Nucleoside triphosphate pyrophosphatase (216 aa).

Aspartate 86 acts as the Proton acceptor in catalysis.

This sequence belongs to the Maf family. Requires a divalent metal cation as cofactor.

The protein localises to the cytoplasm. The enzyme catalyses a ribonucleoside 5'-triphosphate + H2O = a ribonucleoside 5'-phosphate + diphosphate + H(+). The catalysed reaction is a 2'-deoxyribonucleoside 5'-triphosphate + H2O = a 2'-deoxyribonucleoside 5'-phosphate + diphosphate + H(+). Nucleoside triphosphate pyrophosphatase. May have a dual role in cell division arrest and in preventing the incorporation of modified nucleotides into cellular nucleic acids. This Dictyostelium discoideum (Social amoeba) protein is Nucleoside triphosphate pyrophosphatase.